A 464-amino-acid chain; its full sequence is Probable glycosyltransferase Saci_1499 (464 aa).

6 helical membrane-spanning segments follow: residues 6 to 26, 300 to 320, 337 to 357, 373 to 393, 416 to 436, and 439 to 459; these read IFLN…QIIL, LIIY…STLL, ALLF…SLAL, LTAF…KGLL, IIAI…LYIY, and YYVT…TMLL.

This sequence belongs to the glycosyltransferase 2 family.

The protein localises to the cell membrane. In terms of biological role, probably part of a 4-gene DNA damage response locus in which the upstream ups system, in combination with this downstream locus, functions in homologous recombination to rescue Sulfolobales from DNA-damaging threats. In Sulfolobus acidocaldarius (strain ATCC 33909 / DSM 639 / JCM 8929 / NBRC 15157 / NCIMB 11770), this protein is Probable glycosyltransferase Saci_1499.